The chain runs to 502 residues: Lysine--tRNA ligase (502 aa).

Mg(2+) is bound by residues E403 and E410.

Belongs to the class-II aminoacyl-tRNA synthetase family. Homodimer. Mg(2+) is required as a cofactor.

Its subcellular location is the cytoplasm. The catalysed reaction is tRNA(Lys) + L-lysine + ATP = L-lysyl-tRNA(Lys) + AMP + diphosphate. This is Lysine--tRNA ligase from Synechococcus sp. (strain CC9605).